A 483-amino-acid chain; its full sequence is V-type proton ATPase subunit B 2 (483 aa).

The protein belongs to the ATPase alpha/beta chains family. As to quaternary structure, V-ATPase is a heteromultimeric enzyme composed of a peripheral catalytic V1 complex (main components: subunits A, B, C, D, E, and F) attached to an integral membrane V0 proton pore complex (main component: the proteolipid protein).

Non-catalytic subunit of the peripheral V1 complex of vacuolar ATPase. V-ATPase is responsible for acidifying a variety of intracellular compartments in eukaryotic cells. The sequence is that of V-type proton ATPase subunit B 2 from Hordeum vulgare (Barley).